Reading from the N-terminus, the 1257-residue chain is MPLTGIFFNVNGKDVNEENVDPELTLAYYLRNKLGLRGTKLGCEEGVCGSCTVVLGTWDDCQNKAVYRAVNACLVPLFHVHKTFVITVEGVGSRDKIHPIQDRMARGHALQCGFCSPGFVMSAYALFSNQPNPTIQQINAAIRANLCRCTGYRPILEALYSFSSESGGCCGGNKTGGGCCKDKSSSDEDGGYDEKLLSFNDFPKYDPTQEIIFPPSLRVFSDSETPVTLKGDRIELLLPKNIDQFKKFKKDRTVISSGLITRFVSTRNPKEFSQKWISTKYVKEFNEITVNKDSVVVGAALNIQKMADTLTSSLSINIGKEIDSFIQKFSSPQIANFATWTGAIISGAKSSLSVSDLLILFNVLDAKLTLLNNSGELTQVAIEEFAEKKLFATHTIVNAIFSRSLTGFLFCLKLGETSEQDSTNFNFAALVGNQVSRIFVGLGGQPKRLTSLEVHIDALKGLSVSDLCQTTEMSDYKNVKIALTRFSDFMNHKEKTEEIEGINYLQYFKPKTNESAGRPIANYFNERAITGEAFYVNDIQAYNAVHLGFVLSTVPHAEITKIDVSEALQLEGVAGYFGVSDVPGNNTPGLQISNMNFPDDTTIFADKKVESVGQVIGVIAANDVVLARRAAKLVKVEYKELPSLVNFKEAIEAKSLLGDVQHFGKDENLVKESLENSSKVLEGECDIGGQEHYYLETQSSLVIPGEGDELIVNCSTQGTSFTQLMVAETMKIPAHKIIVKTKRLGGGFGGKVNNASWIACMCAIVAKKLNRPTYGFLSRADDLAITGKRHEVHAKYRVGINFDGKIEGIHYQAWLNGGWSKDHSEGVTMVMGLMVDDVYNMGTIRFDGYPVKTNSNSNTALRGYGNPQSKLINEGVMRRIARDVGKSTEEIKRINFALEGGRRYLGGKIHNDALVECWEYCKKWSEFENRQSGIKQFNKNSTAVKRGIAMSSVRFGLPHPGPTGHGIASLLINLDGSVQLSIGGTEMGQGLNQKMLQVCSEALKRPIDTITIVDCSTDKVTNAPETGGSQNADTNGLAVLACCKKIMSRLQPIIDKNDGEWEKSIREAYGAYVPLQCTEYGTVERAKFGVGEMESPYNTTGACAVEMEIDTLTGYNRVIRVDIVMDVGESLNPALDIGQIEGAFIQGYGLVTCEKITFNKTTGQLDQNTAGKYKIPKASDVPKDFRVKLLGINNANGAQVYSSKGIGEPPLMMSCGAVHSSIMNCIDNWRNENGIHEFVDTISPLSAEKIQELCSKK.

Residues 4–91 (TGIFFNVNGK…KTFVITVEGV (88 aa)) form the 2Fe-2S ferredoxin-type domain. 4 residues coordinate [2Fe-2S] cluster: cysteine 43, cysteine 48, cysteine 51, and cysteine 73. The FAD-binding PCMH-type domain maps to 229-459 (LKGDRIELLL…TSLEVHIDAL (231 aa)). Residue glutamate 1208 is the Proton acceptor of the active site.

This sequence belongs to the xanthine dehydrogenase family. [2Fe-2S] cluster is required as a cofactor. FAD serves as cofactor. Requires Mo-molybdopterin as cofactor.

It carries out the reaction an aldehyde + O2 + H2O = a carboxylate + H2O2 + H(+). Its function is as follows. May be involved in the metabolism of 1-methylnicotinamide (MNA). Linked to regulation of longevity through generation of reactive oxygen species, where it probably functions in a pathway downstream of the sirtuin sir-2.1 and the nicotinamide N-methyltransferase anmt-1. The chain is Probable aldehyde oxidase gad-3 from Caenorhabditis elegans.